We begin with the raw amino-acid sequence, 248 residues long: tRNA pseudouridine synthase A (248 aa).

Aspartate 53 serves as the catalytic Nucleophile. Tyrosine 111 contacts substrate.

The protein belongs to the tRNA pseudouridine synthase TruA family. As to quaternary structure, homodimer.

The enzyme catalyses uridine(38/39/40) in tRNA = pseudouridine(38/39/40) in tRNA. In terms of biological role, formation of pseudouridine at positions 38, 39 and 40 in the anticodon stem and loop of transfer RNAs. The polypeptide is tRNA pseudouridine synthase A (Listeria innocua serovar 6a (strain ATCC BAA-680 / CLIP 11262)).